The primary structure comprises 215 residues: Programmed cell death protein 10 homolog (215 aa).

This sequence belongs to the PDCD10 family. As to quaternary structure, interacts with gck-1. In terms of tissue distribution, expressed in pharynx, intestine, germline, vulva and excretory canals.

Its subcellular location is the cytoplasm. It localises to the apical cell membrane. Involved in excretory canal elongation during postembryonic development. Plays a role in promoting Golgi stability, ER integrity and vesicle transport probably by regulating the activation of Rho GTPase cdc-42. Involved in fertility. This Caenorhabditis elegans protein is Programmed cell death protein 10 homolog.